Here is a 448-residue protein sequence, read N- to C-terminus: Histidinol dehydrogenase (448 aa).

Positions 136, 197, and 220 each coordinate NAD(+). Substrate-binding residues include S243, Q265, and H268. Q265 and H268 together coordinate Zn(2+). Active-site proton acceptor residues include E333 and H334. Residues H334, D367, E421, and H426 each coordinate substrate. D367 contributes to the Zn(2+) binding site. H426 provides a ligand contact to Zn(2+).

It belongs to the histidinol dehydrogenase family. The cofactor is Zn(2+).

It catalyses the reaction L-histidinol + 2 NAD(+) + H2O = L-histidine + 2 NADH + 3 H(+). It participates in amino-acid biosynthesis; L-histidine biosynthesis; L-histidine from 5-phospho-alpha-D-ribose 1-diphosphate: step 9/9. In terms of biological role, catalyzes the sequential NAD-dependent oxidations of L-histidinol to L-histidinaldehyde and then to L-histidine. This Pseudomonas savastanoi pv. phaseolicola (strain 1448A / Race 6) (Pseudomonas syringae pv. phaseolicola (strain 1448A / Race 6)) protein is Histidinol dehydrogenase.